The sequence spans 235 residues: Hydroxyacylglutathione hydrolase (235 aa).

Residues H53, H55, D57, H58, H109, D127, and H165 each contribute to the Zn(2+) site.

Belongs to the metallo-beta-lactamase superfamily. Glyoxalase II family. As to quaternary structure, monomer. Zn(2+) serves as cofactor.

It catalyses the reaction an S-(2-hydroxyacyl)glutathione + H2O = a 2-hydroxy carboxylate + glutathione + H(+). The protein operates within secondary metabolite metabolism; methylglyoxal degradation; (R)-lactate from methylglyoxal: step 2/2. Functionally, thiolesterase that catalyzes the hydrolysis of S-D-lactoyl-glutathione to form glutathione and D-lactic acid. In Glaesserella parasuis serovar 5 (strain SH0165) (Haemophilus parasuis), this protein is Hydroxyacylglutathione hydrolase.